A 132-amino-acid chain; its full sequence is ATP synthase epsilon chain (132 aa).

The protein belongs to the ATPase epsilon chain family. As to quaternary structure, F-type ATPases have 2 components, CF(1) - the catalytic core - and CF(0) - the membrane proton channel. CF(1) has five subunits: alpha(3), beta(3), gamma(1), delta(1), epsilon(1). CF(0) has three main subunits: a, b and c.

The protein localises to the cell inner membrane. Its function is as follows. Produces ATP from ADP in the presence of a proton gradient across the membrane. This chain is ATP synthase epsilon chain, found in Anaeromyxobacter dehalogenans (strain 2CP-C).